A 256-amino-acid polypeptide reads, in one-letter code: Alcohol dehydrogenase (256 aa).

12 to 35 (FVAGLGGIGLDTSKELVKRDLKNL) is a binding site for NAD(+). A substrate-binding site is contributed by Ser140. The active-site Proton acceptor is Tyr153.

It belongs to the short-chain dehydrogenases/reductases (SDR) family. In terms of assembly, homodimer.

It catalyses the reaction a primary alcohol + NAD(+) = an aldehyde + NADH + H(+). It carries out the reaction a secondary alcohol + NAD(+) = a ketone + NADH + H(+). This Drosophila teissieri (Fruit fly) protein is Alcohol dehydrogenase (Adh).